The sequence spans 316 residues: NADH-cytochrome b5 reductase-like (316 aa).

Positions 17 to 53 constitute an Oxidoreductase-like domain; sequence KPVEPLPSQCCGSGCSPCVFDLYYRDLERWETARARN. Residues 76–178 enclose the FAD-binding FR-type domain; it reads ETFLAFHIST…RGPFGSFLYE (103 aa). Residues 158–173 and 183–215 contribute to the FAD site; these read ESWRTGDTAFWRGPFG and GELLMLAAGTGLAPMVPILQSITDDEDDETFVT.

It belongs to the flavoprotein pyridine nucleotide cytochrome reductase family. The cofactor is FAD.

The enzyme catalyses 2 Fe(III)-[cytochrome b5] + NADH = 2 Fe(II)-[cytochrome b5] + NAD(+) + H(+). NADH-cytochrome b5 reductases are involved in desaturation and elongation of fatty acids, cholesterol biosynthesis, drug metabolism, and, in erythrocyte, methemoglobin reduction. In Mus musculus (Mouse), this protein is NADH-cytochrome b5 reductase-like (Cyb5rl).